We begin with the raw amino-acid sequence, 253 residues long: Dihydroanticapsin 7-dehydrogenase (253 aa).

9–31 (LITGGASGIGYAAVQAFLGQQAN) provides a ligand contact to NAD(+). S139 provides a ligand contact to substrate. The Proton acceptor role is filled by Y152.

Belongs to the short-chain dehydrogenases/reductases (SDR) family.

It catalyses the reaction L-dihydroanticapsin + NAD(+) = L-anticapsin + NADH + H(+). The protein operates within antibiotic biosynthesis; bacilysin biosynthesis. Part of the bacABCDEFG operon responsible for the biosynthesis of bacilysin, an irreversible inactivator of the glutaminase domain of glucosamine synthetase. Catalyzes the dehydrogenation of the C7-hydroxyl group in the 4S-tetrahydrotyrosine (4S-H4Tyr) to yield anticapsin (epoxycyclohexanonyl-Ala). It is not able to oxidize the 4R-H4Tyr diastereomer and the dihydrobacilysin dipeptide (L-Ala-4S-H4Tyr dipeptide). The sequence is that of Dihydroanticapsin 7-dehydrogenase from Bacillus subtilis (strain 168).